A 346-amino-acid chain; its full sequence is NADH-ubiquinone oxidoreductase chain 2 (346 aa).

A run of 10 helical transmembrane segments spans residues 25–45, 60–80, 95–115, 124–144, 149–169, 178–195, 200–219, 247–267, 274–294, and 326–346; these read HWVLAWTGLEINTLAIIPLIS, FLTQAAASALVLFSSMTNAWA, CLLLTAAIAIKLGLVPFHFWF, LMTALLLSTLMKFPPLTLLLM, LNPALLTAMALASTALGGWMG, ILAFSSISHLGWIAIILV, LALLTFYLYTIMTSAVFMAL, VLLSLAGLPPLTGFMPKWLII, EMTPAAMAIAMLSLLSLFFYL, and AILASLSILLLPLSPMVHAIV.

It belongs to the complex I subunit 2 family.

Its subcellular location is the mitochondrion inner membrane. It carries out the reaction a ubiquinone + NADH + 5 H(+)(in) = a ubiquinol + NAD(+) + 4 H(+)(out). Core subunit of the mitochondrial membrane respiratory chain NADH dehydrogenase (Complex I) that is believed to belong to the minimal assembly required for catalysis. Complex I functions in the transfer of electrons from NADH to the respiratory chain. The immediate electron acceptor for the enzyme is believed to be ubiquinone. This chain is NADH-ubiquinone oxidoreductase chain 2 (MT-ND2), found in Anas capensis (Cape teal).